The sequence spans 296 residues: NADH-cytochrome b5 reductase 2 (296 aa).

A helical transmembrane segment spans residues 2 to 24 (LVALAAIGVTVLLFLIKALGSGA). The FAD-binding FR-type domain occupies 35-147 (NAKYPLPLIE…RGPNGLLVYK (113 aa)). Residues 127–142 (DSLK…GPNG) and 166–201 (VAKH…KCYL) each bind FAD.

It belongs to the flavoprotein pyridine nucleotide cytochrome reductase family. FAD is required as a cofactor.

It is found in the membrane. The enzyme catalyses 2 Fe(III)-[cytochrome b5] + NADH = 2 Fe(II)-[cytochrome b5] + NAD(+) + H(+). Functionally, NADH-cytochrome b5 reductases are involved in desaturation and elongation of fatty acids, cholesterol biosynthesis and drug metabolism. The sequence is that of NADH-cytochrome b5 reductase 2 (cyb5r2) from Xenopus laevis (African clawed frog).